The following is a 75-amino-acid chain: Accessory gland-specific peptide 57Da (75 aa).

The first 19 residues, 1–19 (MKFLALFVTLLVVLALVSA), serve as a signal peptide directing secretion. The tract at residues 55–75 (AAPAAAPAAPEAGLADAPAES) is disordered. The segment covering 56–75 (APAAAPAAPEAGLADAPAES) has biased composition (low complexity).

In terms of tissue distribution, lumen fluid of male accessory glands, becomes seminal fluid.

Its subcellular location is the secreted. Functionally, transferred from male to female during mating and may affect egglaying and behavior after mating. The sequence is that of Accessory gland-specific peptide 57Da (Mst57Da) from Drosophila melanogaster (Fruit fly).